Consider the following 266-residue polypeptide: Apolipoprotein A-I (266 aa).

Residues 1 to 18 (MKAVVLTLAVLFLTGSQA) form the signal peptide. Repeat copies occupy residues 67–88 (LKLLDNWDTLGSTVTKLREQIG) and 89–110 (PVTQEFWDNLEKETEVLRQEMS). The 10 X approximate tandem repeats stretch occupies residues 67–266 (LKLLDNWDTL…DEATKKLNAQ (200 aa)). Position 109 is a methionine sulfoxide (methionine 109). The stretch at 111–121 (KDLEEVKQKVQ) is one 3; half-length repeat. 5 repeat units span residues 122–143 (PYLDDFQKKWQEEVELYRQKVA), 144–165 (PLGTELREGARQKLQELHEKLS), 166–187 (PLGEELRDRARTHVDALRAQLA), 188–209 (PYSDELRERLAARLQALKESGG), and 210–231 (ASLAEYHAKASEHLSTLSEKAK). The stretch at 232–242 (PALEDLRQGLL) is one 9; half-length repeat. The stretch at 243 to 266 (PVLESFKVGLMAIVDEATKKLNAQ) is repeat 10.

This sequence belongs to the apolipoprotein A1/A4/E family. In terms of assembly, homodimer. Interacts with APOA1BP and CLU. Component of a sperm activating protein complex (SPAP), consisting of APOA1, an immunoglobulin heavy chain, an immunoglobulin light chain and albumin. Interacts with NDRG1. Interacts with SCGB3A2. Interacts with NAXE and YJEFN3. Glycosylated. In terms of processing, palmitoylated. Post-translationally, phosphorylation sites are present in the extracellular medium.

The protein localises to the secreted. Functionally, participates in the reverse transport of cholesterol from tissues to the liver for excretion by promoting cholesterol efflux from tissues and by acting as a cofactor for the lecithin cholesterol acyltransferase (LCAT). As part of the SPAP complex, activates spermatozoa motility. In Acinonyx jubatus (Cheetah), this protein is Apolipoprotein A-I (APOA1).